Reading from the N-terminus, the 1204-residue chain is Probable cation-transporting ATPase 13A4 (1204 aa).

Residues 1-32 are Cytoplasmic-facing; the sequence is MGENPAKSHYAQLNLGEENEMEIFGYKTQCCR. The helical transmembrane segment at 33 to 53 threads the bilayer; the sequence is KALCIAGYILSCGALLLLFYW. The Extracellular portion of the chain corresponds to 54 to 219; it reads KPEWDVWANC…FSVCLWFAED (166 aa). Residues 220 to 242 form a helical membrane-spanning segment; sequence YMEYAAAIIIMSPLSISLTVYDL. The Cytoplasmic segment spans residues 243–397; it reads RQQSVKLQRL…NFRLYRDALR (155 aa). A helical membrane pass occupies residues 398–418; that stretch reads FLMCLIAFAAIGMIYTVCVFA. Over 419-433 the chain is Extracellular; it reads LNGEEAGEVVKKALD. The helical transmembrane segment at 434-454 threads the bilayer; sequence VITIAVPPALPAALTTGIIYT. Over 455-897 the chain is Cytoplasmic; the sequence is QRRLKKKGIF…REGRAALVTS (443 aa). Catalysis depends on aspartate 483, which acts as the 4-aspartylphosphate intermediate. Mg(2+)-binding residues include aspartate 845 and aspartate 849. A helical membrane pass occupies residues 898 to 918; sequence FCMFKYMALYSTIQYLGVLLL. At 919–929 the chain is on the extracellular side; sequence YWQLNSFGNYQ. A helical membrane pass occupies residues 930 to 950; sequence FLFQDLAITTVIGMTMSFTEA. Residues 951–967 lie on the Cytoplasmic side of the membrane; the sequence is YPKLVPYRPPSQLVSPP. A helical membrane pass occupies residues 968 to 988; sequence LLLSVILNILFSLGMQILGFL. Topologically, residues 989–1043 are extracellular; the sequence is MVQKQPWYSKTDIHSACLSVNNHVENSSSASSLGLHGVGGGDPTEVDNGYKSYEN. The chain crosses the membrane as a helical span at residues 1044–1064; sequence TTVWLLSTINCLIIALVFSKG. Topologically, residues 1065–1075 are cytoplasmic; the sequence is KPFRQPIYTNY. Residues 1076–1096 form a helical membrane-spanning segment; that stretch reads VFIMVLVGQLGVCLFLVFADI. At 1097-1113 the chain is on the extracellular side; the sequence is DDLYSKMDLVCTPTTWR. Residues 1114–1134 traverse the membrane as a helical segment; the sequence is ISMVMMLAVTLAVSFLVEEAI. Residues 1135-1204 lie on the Cytoplasmic side of the membrane; that stretch reads IENRALWLWL…PTFDSNEDAL (70 aa).

It belongs to the cation transport ATPase (P-type) (TC 3.A.3) family. Type V subfamily.

It is found in the membrane. The enzyme catalyses ATP + H2O = ADP + phosphate + H(+). The chain is Probable cation-transporting ATPase 13A4 (ATP13A4) from Gallus gallus (Chicken).